A 451-amino-acid polypeptide reads, in one-letter code: KNR4/SMI1 homolog 1 (451 aa).

Residues 410-422 (ENQIAGGSDNAKN) are compositionally biased toward polar residues. Positions 410–451 (ENQIAGGSDNAKNQVKLGETSDTKQDDTSKIASTVSTSDEDE) are disordered. The segment covering 428–438 (ETSDTKQDDTS) has biased composition (basic and acidic residues). The span at 439–451 (KIASTVSTSDEDE) shows a compositional bias: polar residues.

The protein belongs to the KNR4/SMI1 family.

The sequence is that of KNR4/SMI1 homolog 1 from Debaryomyces hansenii (strain ATCC 36239 / CBS 767 / BCRC 21394 / JCM 1990 / NBRC 0083 / IGC 2968) (Yeast).